The sequence spans 216 residues: MTYRVKEIFHTLQGEGMRAGRAAVFCRFSGCNLWTGWAQDRPAAVCPFCDTDFVGTDGPGGGVFEDAATLAAAILAAFPYKTGEGYRPYVVFTGGEPALQLDRPLIDILHAHGCEVAIETNGTVRLPEGIDWVTVSPKAGTRLAVTSGDELKLVWPQQGICPESYESLAFTYLLMQPRDGLGDAGRGDAESEAVRWCLAHPRWRLCLQTHKYLGIP.

Substrate contacts are provided by residues 12–14 (LQG) and Arg27. The Radical SAM core domain occupies 18–216 (RAGRAAVFCR…LQTHKYLGIP (199 aa)). [4Fe-4S] cluster contacts are provided by Cys31, Cys46, and Cys49. Thr51 lines the Mg(2+) pocket. Residue Thr93 coordinates substrate. S-adenosyl-L-methionine is bound by residues Gly95, 136–138 (SPK), and 176–179 (QPRD). Pro216 contributes to the substrate binding site.

It belongs to the radical SAM superfamily. 7-carboxy-7-deazaguanine synthase family. In terms of assembly, homodimer. It depends on [4Fe-4S] cluster as a cofactor. S-adenosyl-L-methionine serves as cofactor. Requires Mg(2+) as cofactor.

It carries out the reaction 6-carboxy-5,6,7,8-tetrahydropterin + H(+) = 7-carboxy-7-deazaguanine + NH4(+). The protein operates within purine metabolism; 7-cyano-7-deazaguanine biosynthesis. In terms of biological role, catalyzes the complex heterocyclic radical-mediated conversion of 6-carboxy-5,6,7,8-tetrahydropterin (CPH4) to 7-carboxy-7-deazaguanine (CDG), a step common to the biosynthetic pathways of all 7-deazapurine-containing compounds. The polypeptide is 7-carboxy-7-deazaguanine synthase (Nitratidesulfovibrio vulgaris (strain ATCC 29579 / DSM 644 / CCUG 34227 / NCIMB 8303 / VKM B-1760 / Hildenborough) (Desulfovibrio vulgaris)).